The following is a 344-amino-acid chain: HTH-type transcriptional regulator MalR (344 aa).

The HTH lacI-type domain occupies 1–54 (MTTRLADIAAQAGVSEATVSRVLNGKPGVAATTRQSVLAALDVLGYERPVRLRQ). Positions 5–24 (LADIAAQAGVSEATVSRVLN) form a DNA-binding region, H-T-H motif.

Functionally, transcriptional repressor of the maltosaccharide utilization operon malEFG. This chain is HTH-type transcriptional regulator MalR (malR), found in Streptomyces coelicolor (strain ATCC BAA-471 / A3(2) / M145).